The following is a 555-amino-acid chain: Arginine--tRNA ligase (555 aa).

Residues 117–127 carry the 'HIGH' region motif; sequence ANPNGPLHVGH.

Belongs to the class-I aminoacyl-tRNA synthetase family.

It is found in the cytoplasm. The enzyme catalyses tRNA(Arg) + L-arginine + ATP = L-arginyl-tRNA(Arg) + AMP + diphosphate. The chain is Arginine--tRNA ligase from Methanospirillum hungatei JF-1 (strain ATCC 27890 / DSM 864 / NBRC 100397 / JF-1).